The following is a 161-amino-acid chain: uncharacterized protein (161 aa).

The segment covering 1–16 (MPRAGRAPAEGGPAPG) has biased composition (low complexity). Disordered regions lie at residues 1–23 (MPRA…SRCL), 50–91 (GRPV…TQSA), and 140–161 (RGPA…WRIS).

This is an uncharacterized protein from Homo sapiens (Human).